The sequence spans 384 residues: Iron(3+)-hydroxamate import system permease protein FhuB (384 aa).

Helical transmembrane passes span 58-78 (GAVIVLIAGLCLLCLGAFLSI), 115-135 (TAAAALVGALLAVSGAIMQGM), 154-174 (FAVSIAFAFFPGLSAMGLVLW), 176-196 (FAGAGLGASTVMGIGMFSRGG), 202-222 (LALAGTAVTYFFTGISTAIAI), 243-263 (WSGVQLLLIAGAVGLTLAFFI), 296-316 (VILTGAAVSIAGTIAFIGLII), 330-350 (WIIPCSAVLGAVLLVFADIAA), and 357-377 (FETPVGALTSLIGVPFFFYLA).

It belongs to the binding-protein-dependent transport system permease family. FecCD subfamily. In terms of assembly, the complex is composed of an ATP-binding protein (FhuC), two transmembrane proteins (FhuB and FhuG) and a solute-binding protein (FhuD or YxeB).

The protein resides in the cell membrane. It is found in the membrane raft. Part of the ABC transporter complex FhuBGCD involved in iron(3+)-hydroxamate import. Responsible for the translocation of the substrate across the membrane. The chain is Iron(3+)-hydroxamate import system permease protein FhuB (fhuB) from Bacillus subtilis (strain 168).